A 202-amino-acid polypeptide reads, in one-letter code: MIGYLKGQILSLSEDSVLILVNGVGYEVNCAPVAVSALEEGQETALYIAESISPYDGTVLYGFLTKEDKQLWAIFKTSIPNTGAKKALEYLNKALRSVADFHNAIVKKDPKILTGIFGFTAKTAEKLIHSLDGKMDAVTIAGVPKIKIEGEAPFMSEVMMALTALGYSPMEARKAIDQLYKTGLANDSVENIIRAALRILKK.

The segment at 1–64 (MIGYLKGQIL…YDGTVLYGFL (64 aa)) is domain I. The interval 65–146 (TKEDKQLWAI…AVTIAGVPKI (82 aa)) is domain II. Residues 147–155 (KIEGEAPFM) are flexible linker. A domain III region spans residues 155 to 202 (MSEVMMALTALGYSPMEARKAIDQLYKTGLANDSVENIIRAALRILKK).

Belongs to the RuvA family. Homotetramer. Forms an RuvA(8)-RuvB(12)-Holliday junction (HJ) complex. HJ DNA is sandwiched between 2 RuvA tetramers; dsDNA enters through RuvA and exits via RuvB. An RuvB hexamer assembles on each DNA strand where it exits the tetramer. Each RuvB hexamer is contacted by two RuvA subunits (via domain III) on 2 adjacent RuvB subunits; this complex drives branch migration. In the full resolvosome a probable DNA-RuvA(4)-RuvB(12)-RuvC(2) complex forms which resolves the HJ.

It localises to the cytoplasm. The RuvA-RuvB-RuvC complex processes Holliday junction (HJ) DNA during genetic recombination and DNA repair, while the RuvA-RuvB complex plays an important role in the rescue of blocked DNA replication forks via replication fork reversal (RFR). RuvA specifically binds to HJ cruciform DNA, conferring on it an open structure. The RuvB hexamer acts as an ATP-dependent pump, pulling dsDNA into and through the RuvAB complex. HJ branch migration allows RuvC to scan DNA until it finds its consensus sequence, where it cleaves and resolves the cruciform DNA. This chain is Holliday junction branch migration complex subunit RuvA, found in Elusimicrobium minutum (strain Pei191).